Reading from the N-terminus, the 1097-residue chain is DNA-directed RNA polymerase subunit beta (1097 aa).

Residues 1072-1097 (QDINPRRNTPSRPTYESLGTSEYEED) are disordered. The segment covering 1077–1091 (RRNTPSRPTYESLGT) has biased composition (polar residues).

Belongs to the RNA polymerase beta chain family. In cyanobacteria the RNAP catalytic core is composed of 2 alpha, 1 beta, 1 beta', 1 gamma and 1 omega subunit. When a sigma factor is associated with the core the holoenzyme is formed, which can initiate transcription.

It carries out the reaction RNA(n) + a ribonucleoside 5'-triphosphate = RNA(n+1) + diphosphate. In terms of biological role, DNA-dependent RNA polymerase catalyzes the transcription of DNA into RNA using the four ribonucleoside triphosphates as substrates. In Prochlorococcus marinus (strain AS9601), this protein is DNA-directed RNA polymerase subunit beta.